Reading from the N-terminus, the 441-residue chain is ATP-dependent protease ATPase subunit HslU (441 aa).

ATP contacts are provided by residues Ile-18, 60-65, Asp-254, Glu-319, and Arg-391; that span reads GVGKTE.

It belongs to the ClpX chaperone family. HslU subfamily. In terms of assembly, a double ring-shaped homohexamer of HslV is capped on each side by a ring-shaped HslU homohexamer. The assembly of the HslU/HslV complex is dependent on binding of ATP.

It localises to the cytoplasm. Its function is as follows. ATPase subunit of a proteasome-like degradation complex; this subunit has chaperone activity. The binding of ATP and its subsequent hydrolysis by HslU are essential for unfolding of protein substrates subsequently hydrolyzed by HslV. HslU recognizes the N-terminal part of its protein substrates and unfolds these before they are guided to HslV for hydrolysis. This is ATP-dependent protease ATPase subunit HslU from Shewanella woodyi (strain ATCC 51908 / MS32).